We begin with the raw amino-acid sequence, 254 residues long: NAD-dependent protein deacetylase 1 (254 aa).

Residues 5-254 (ASDLRSGVER…GETLGPFVGN (250 aa)) form the Deacetylase sirtuin-type domain. Residues alanine 31, threonine 35, phenylalanine 42, arginine 43, glutamine 108, isoleucine 110, aspartate 111, and histidine 128 each coordinate NAD(+). Phenylalanine 42 is a binding site for nicotinamide. Isoleucine 110 and aspartate 111 together coordinate nicotinamide. Histidine 128 acts as the Proton acceptor in catalysis. Zn(2+) contacts are provided by cysteine 136, cysteine 139, cysteine 160, and cysteine 163. Positions 201, 202, 226, 243, and 244 each coordinate NAD(+).

Belongs to the sirtuin family. Class U subfamily. It depends on Zn(2+) as a cofactor.

The protein resides in the cytoplasm. The catalysed reaction is N(6)-acetyl-L-lysyl-[protein] + NAD(+) + H2O = 2''-O-acetyl-ADP-D-ribose + nicotinamide + L-lysyl-[protein]. Its function is as follows. NAD-dependent protein deacetylase which modulates the activities of several enzymes which are inactive in their acetylated form. The polypeptide is NAD-dependent protein deacetylase 1 (Bradyrhizobium diazoefficiens (strain JCM 10833 / BCRC 13528 / IAM 13628 / NBRC 14792 / USDA 110)).